The following is a 98-amino-acid chain: Serine rich endogenous peptide 10 (98 aa).

An N-terminal signal peptide occupies residues 1 to 29 (MERKKFSSKFIHLLIVFLLLCTFLSRTES). The segment at 50–98 (NSAIGTPSSTSDHAPGSNGRKLMSIYRPNGDIFTGPSGSGHGGGRTPAP) is disordered. Over residues 52-61 (AIGTPSSTSD) the composition is skewed to polar residues. 2 short sequence motifs (SCOOP motif) span residues 52-66 (AIGTPSSTSDHAPGS) and 80-94 (DIFTGPSGSGHGGGR). 2 short sequence motifs (sxS motif essential for MIK2 binding) span residues 58–60 (STS) and 86–88 (SGS). Positions 86–98 (SGSGHGGGRTPAP) are enriched in gly residues.

Belongs to the serine rich endogenous peptide (SCOOP) phytocytokine family. Interacts with MIK2 (via extracellular leucine-rich repeat domain); this interaction triggers the formation of complex between MIK2 and the BAK1/SERK3 and SERK4 coreceptors, and subsequent BAK1 activation by phosphorylation. Mostly expressed in leaves and seedlings shoots, to a lower extent, in roots, but barely in flowers.

It is found in the cell membrane. It localises to the secreted. Its subcellular location is the extracellular space. The protein localises to the apoplast. Its function is as follows. Brassicaceae-specific phytocytokine (plant endogenous peptide released into the apoplast) perceived by MIK2 in a BAK1/SERK3 and SERK4 coreceptors-dependent manner, that modulates various physiological and antimicrobial processes including growth prevention and reactive oxygen species (ROS) response regulation. Inhibits root growth and regulates root meristems. Promotes ROS production and MAPK (e.g. MPK3, MPK4 and MPK6) activation in a MIK2-dependent manner, thus leading to the up-regulation of immune-related marker genes (e.g. WRKY30, WRKY33 and CYP81F2). The sequence is that of Serine rich endogenous peptide 10 from Arabidopsis thaliana (Mouse-ear cress).